The chain runs to 359 residues: G-protein coupled receptor 15 (359 aa).

Over 1–33 (MDPEETSVYLDYYYATSPNPDIRETHSHVPYTS) the chain is Extracellular. Residues 34–54 (VFLPVFYTAVFLTGVLGNLVL) form a helical membrane-spanning segment. Over 55–69 (MGALHFKPGSRRLID) the chain is Cytoplasmic. A helical transmembrane segment spans residues 70–90 (IFIINLAASDFIFLVTLPLWV). Topologically, residues 91-120 (DKEASLGLWRTGSFLCKGSSYMISVNMHCS) are extracellular. Residues 121 to 141 (VFLLTCMSVDRYLAIVCPVVS) traverse the membrane as a helical segment. Topologically, residues 142-149 (RKFRRTDC) are cytoplasmic. A helical transmembrane segment spans residues 150–170 (AYVVCASIWFISCLLGLPTLL). The Extracellular portion of the chain corresponds to 171–192 (SRELTLIDDKPYCAEKKATPLK). A helical transmembrane segment spans residues 193–213 (LIWSLVALIFTFFVPLLNIVT). The Cytoplasmic portion of the chain corresponds to 214–239 (CYCCIARKLCAHYQQSGRHNKKLKKS). The chain crosses the membrane as a helical span at residues 240 to 260 (IKIILIVVAAFLVSWLPFNTF). Over 261-283 (KLLAIVSGLQERYFPSAMLQLGM) the chain is Extracellular. The chain crosses the membrane as a helical span at residues 284–304 (EVSGPLAFANSCVNPFIYYIF). At 305–359 (DSYIRRAIVHCLCPCLKNYDFGSSTETSDSHLTKALSTFIHAEDFTRRRKRSVSL) the chain is on the cytoplasmic side. Phosphoserine is present on Ser-358.

The protein belongs to the G-protein coupled receptor 1 family. As to quaternary structure, interacts with adapter YWHAE; this interaction promotes ER-to-Golgi transport of GPR15. Post-translationally, phosphorylation is necessary for YWHAE binding and efficient surface expression. O-glycosylated. Sialylated O-glycans in the N-terminal tail inhibits binding of GPR15LG. In terms of processing, sulfation is required for efficient binding of GPR15LG.

It is found in the cell membrane. In terms of biological role, g protein-coupled receptor that plays an important role in immune homeostasis. Acts via its natural ligand GPR15LG, a chemokine-like polypeptide strongly expressed in gastrointestinal tissues. GPR15-GPR15LG signaling axis regulates intestinal homeostasis and inflammation through the migration of immune cells. Controls thereby the specific homing of T-cells, particularly FOXP3+ regulatory T-cells (Tregs), to the large intestine lamina propria. Also required for skin localization of thymus-derived dendritic epidermal T-cells. Plays an important role in mediating cytoprotective function as well as angiogenesis of thrombomodulin. Mechanistically, preferentially signals through the Gi/o pathway to inhibit adenylate cyclase activity and activate a phosphatidylinositol-calcium second messenger system that regulates the release of Ca(2+) ions from intracellular stores. The polypeptide is G-protein coupled receptor 15 (GPR15) (Macaca fascicularis (Crab-eating macaque)).